An 815-amino-acid chain; its full sequence is Protein SMAX1-LIKE 3 (815 aa).

A Clp R domain is found at Val8–Glu171. 2 repeat regions span residues Leu12–Leu80 and Ile99–Glu171. The disordered stretch occupies residues Ser750–Asp769. Positions Leu778–Leu782 match the EAR motif.

Belongs to the ClpA/ClpB family. Interacts probably with TPL/TPR in an EAR-motif dependent manner. As to expression, expressed in roots and seedlings.

Its function is as follows. May function in a transcriptional corepressor complex. The protein is Protein SMAX1-LIKE 3 of Arabidopsis thaliana (Mouse-ear cress).